The chain runs to 691 residues: Elongation factor G (691 aa).

A tr-type G domain is found at 8–283 (EDYRNFGIMA…AVVDYLPSPA (276 aa)). GTP contacts are provided by residues 17–24 (AHIDAGKT), 81–85 (DTPGH), and 135–138 (NKMD).

It belongs to the TRAFAC class translation factor GTPase superfamily. Classic translation factor GTPase family. EF-G/EF-2 subfamily.

The protein localises to the cytoplasm. Its function is as follows. Catalyzes the GTP-dependent ribosomal translocation step during translation elongation. During this step, the ribosome changes from the pre-translocational (PRE) to the post-translocational (POST) state as the newly formed A-site-bound peptidyl-tRNA and P-site-bound deacylated tRNA move to the P and E sites, respectively. Catalyzes the coordinated movement of the two tRNA molecules, the mRNA and conformational changes in the ribosome. The polypeptide is Elongation factor G (Methylobacterium sp. (strain 4-46)).